A 436-amino-acid polypeptide reads, in one-letter code: Trigger factor (436 aa).

In terms of domain architecture, PPIase FKBP-type spans 164–249; that stretch reads GDTVVIDFEG…IHEVKTKELP (86 aa).

It belongs to the FKBP-type PPIase family. Tig subfamily.

It localises to the cytoplasm. It catalyses the reaction [protein]-peptidylproline (omega=180) = [protein]-peptidylproline (omega=0). In terms of biological role, involved in protein export. Acts as a chaperone by maintaining the newly synthesized protein in an open conformation. Functions as a peptidyl-prolyl cis-trans isomerase. In Ligilactobacillus salivarius (strain UCC118) (Lactobacillus salivarius), this protein is Trigger factor.